The sequence spans 337 residues: Glyceraldehyde-3-phosphate dehydrogenase, cytosolic (337 aa).

Residues 13-14, aspartate 35, and arginine 82 contribute to the NAD(+) site; that span reads RI. Residues 153 to 155, threonine 184, 213 to 214, and arginine 236 contribute to the D-glyceraldehyde 3-phosphate site; these read SCT and TG. Cysteine 154 serves as the catalytic Nucleophile. Asparagine 318 contributes to the NAD(+) binding site.

The protein belongs to the glyceraldehyde-3-phosphate dehydrogenase family. In terms of assembly, homotetramer.

It is found in the cytoplasm. The enzyme catalyses D-glyceraldehyde 3-phosphate + phosphate + NAD(+) = (2R)-3-phospho-glyceroyl phosphate + NADH + H(+). The protein operates within carbohydrate degradation; glycolysis; pyruvate from D-glyceraldehyde 3-phosphate: step 1/5. Functionally, key enzyme in glycolysis that catalyzes the first step of the pathway by converting D-glyceraldehyde 3-phosphate (G3P) into 3-phospho-D-glyceroyl phosphate. Essential for the maintenance of cellular ATP levels and carbohydrate metabolism. The protein is Glyceraldehyde-3-phosphate dehydrogenase, cytosolic (GAPC) of Craterostigma plantagineum (Blue gem).